A 388-amino-acid chain; its full sequence is GTPase Obg (388 aa).

Residues 1 to 159 (MKFVDEAVIK…RELRLELLLL (159 aa)) form the Obg domain. The OBG-type G domain maps to 160-333 (ADVGMLGLPN…LCYKLADFME (174 aa)). GTP-binding positions include 166–173 (GLPNAGKS), 191–195 (FTTLI), 213–216 (DIPG), 283–286 (NKVD), and 314–316 (SAV). Mg(2+) contacts are provided by Ser-173 and Thr-193. Positions 359 to 380 (NQGEVITEDDDDWDDWDDEEDD) are disordered. Over residues 364 to 380 (ITEDDDDWDDWDDEEDD) the composition is skewed to acidic residues.

The protein belongs to the TRAFAC class OBG-HflX-like GTPase superfamily. OBG GTPase family. Monomer. Mg(2+) is required as a cofactor.

The protein resides in the cytoplasm. Functionally, an essential GTPase which binds GTP, GDP and possibly (p)ppGpp with moderate affinity, with high nucleotide exchange rates and a fairly low GTP hydrolysis rate. Plays a role in control of the cell cycle, stress response, ribosome biogenesis and in those bacteria that undergo differentiation, in morphogenesis control. This is GTPase Obg from Vibrio vulnificus (strain YJ016).